The primary structure comprises 467 residues: tRNA-2-methylthio-N(6)-dimethylallyladenosine synthase (467 aa).

The 121-residue stretch at 5–125 folds into the MTTase N-terminal domain; it reads RKLHIKSYGC…LPQLLAQASR (121 aa). [4Fe-4S] cluster-binding residues include Cys14, Cys50, Cys88, Cys166, Cys170, and Cys173. The region spanning 152–384 is the Radical SAM core domain; that stretch reads RARGVSAFVT…QSLIDSQQAA (233 aa). The 63-residue stretch at 387-449 folds into the TRAM domain; that stretch reads KAAIGSVVDV…RYSLLGELVA (63 aa).

Belongs to the methylthiotransferase family. MiaB subfamily. Monomer. [4Fe-4S] cluster serves as cofactor.

The protein resides in the cytoplasm. It catalyses the reaction N(6)-dimethylallyladenosine(37) in tRNA + (sulfur carrier)-SH + AH2 + 2 S-adenosyl-L-methionine = 2-methylsulfanyl-N(6)-dimethylallyladenosine(37) in tRNA + (sulfur carrier)-H + 5'-deoxyadenosine + L-methionine + A + S-adenosyl-L-homocysteine + 2 H(+). Its function is as follows. Catalyzes the methylthiolation of N6-(dimethylallyl)adenosine (i(6)A), leading to the formation of 2-methylthio-N6-(dimethylallyl)adenosine (ms(2)i(6)A) at position 37 in tRNAs that read codons beginning with uridine. In Bradyrhizobium sp. (strain ORS 278), this protein is tRNA-2-methylthio-N(6)-dimethylallyladenosine synthase.